Here is a 353-residue protein sequence, read N- to C-terminus: Photosystem II protein D1 (353 aa).

N-acetylthreonine is present on Thr-2. Thr-2 carries the phosphothreonine modification. The next 3 helical transmembrane spans lie at 29–46, 118–133, and 142–156; these read YIGW…TATS, HFLL…EWEL, and WIAV…AATA. His-118 lines the chlorophyll a pocket. Position 126 (Tyr-126) interacts with pheophytin a. [CaMn4O5] cluster contacts are provided by Asp-170 and Glu-189. The helical transmembrane segment at 197–218 threads the bilayer; that stretch reads FHMLGVAGVFGGSLFSAMHGSL. His-198 contributes to the chlorophyll a binding site. Residues His-215 and 264 to 265 each bind a quinone; that span reads SF. His-215 is a Fe cation binding site. His-272 serves as a coordination point for Fe cation. A helical transmembrane segment spans residues 274–288; the sequence is FLAAWPVVGIWFTAL. [CaMn4O5] cluster-binding residues include His-332, Glu-333, Asp-342, and Ala-344. The propeptide occupies 345–353; that stretch reads AVEVPSING.

It belongs to the reaction center PufL/M/PsbA/D family. As to quaternary structure, PSII is composed of 1 copy each of membrane proteins PsbA, PsbB, PsbC, PsbD, PsbE, PsbF, PsbH, PsbI, PsbJ, PsbK, PsbL, PsbM, PsbT, PsbX, PsbY, PsbZ, Psb30/Ycf12, at least 3 peripheral proteins of the oxygen-evolving complex and a large number of cofactors. It forms dimeric complexes. The cofactor is The D1/D2 heterodimer binds P680, chlorophylls that are the primary electron donor of PSII, and subsequent electron acceptors. It shares a non-heme iron and each subunit binds pheophytin, quinone, additional chlorophylls, carotenoids and lipids. D1 provides most of the ligands for the Mn4-Ca-O5 cluster of the oxygen-evolving complex (OEC). There is also a Cl(-1) ion associated with D1 and D2, which is required for oxygen evolution. The PSII complex binds additional chlorophylls, carotenoids and specific lipids.. Post-translationally, tyr-161 forms a radical intermediate that is referred to as redox-active TyrZ, YZ or Y-Z. In terms of processing, C-terminally processed by CTPA; processing is essential to allow assembly of the oxygen-evolving complex and thus photosynthetic growth.

The protein resides in the plastid. The protein localises to the chloroplast thylakoid membrane. The catalysed reaction is 2 a plastoquinone + 4 hnu + 2 H2O = 2 a plastoquinol + O2. Functionally, photosystem II (PSII) is a light-driven water:plastoquinone oxidoreductase that uses light energy to abstract electrons from H(2)O, generating O(2) and a proton gradient subsequently used for ATP formation. It consists of a core antenna complex that captures photons, and an electron transfer chain that converts photonic excitation into a charge separation. The D1/D2 (PsbA/PsbD) reaction center heterodimer binds P680, the primary electron donor of PSII as well as several subsequent electron acceptors. In Cucumis sativus (Cucumber), this protein is Photosystem II protein D1.